A 643-amino-acid chain; its full sequence is Pesticidal crystal protein Cry11Aa (643 aa).

This sequence belongs to the delta endotoxin family.

Promotes colloidosmotic lysis by binding to the midgut epithelial cells of mosquitos. The polypeptide is Pesticidal crystal protein Cry11Aa (cry11Aa) (Bacillus thuringiensis subsp. israelensis).